We begin with the raw amino-acid sequence, 413 residues long: MKFYLVGGAVRDNLLNLTVKDRDHMVVGATPQQMLEMGYRQVGKDFPVFLHPETGQEYALARTERKTGVGYGGFSCHASPDVTLEEDLLRRDLTINAIAQDEEGQLYDPYGGVDDINNRVLRHVSDAFVEDPLRVLRVARFAARFHRQGFTIADETLAMMTQISHSGELEALTAERVFLELDKALATDSPQVFIHVLNQCDALAILFPEIHALFGVPQPVKWHPEIDTGIHTLMVLEQAAKLCDDNSVRFAALVHDLGKALSPKEHLPKHHGHGQKGLALIKVLCARVRVPNDYRDLALLVSDLHQNIHQIEELRPDTLVKIFDKADLWRKPERLEQIALACEADAKGRLGQEEWSYPQADYFKQCFMAANKVAVKPIIEAGFKGAEIKAQLQLKRIEAVAEIKQNLNQTDSP.

ATP-binding residues include Gly8 and Arg11. The CTP site is built by Gly8 and Arg11. Residues Asp21 and Asp23 each contribute to the Mg(2+) site. ATP is bound by residues Arg91, Arg137, and Arg140. CTP is bound by residues Arg91, Arg137, and Arg140. The region spanning 228 to 329 (TGIHTLMVLE…VKIFDKADLW (102 aa)) is the HD domain.

This sequence belongs to the tRNA nucleotidyltransferase/poly(A) polymerase family. Bacterial CCA-adding enzyme type 1 subfamily. In terms of assembly, monomer. Can also form homodimers and oligomers. Requires Mg(2+) as cofactor. Ni(2+) is required as a cofactor.

It carries out the reaction a tRNA precursor + 2 CTP + ATP = a tRNA with a 3' CCA end + 3 diphosphate. The enzyme catalyses a tRNA with a 3' CCA end + 2 CTP + ATP = a tRNA with a 3' CCACCA end + 3 diphosphate. Functionally, catalyzes the addition and repair of the essential 3'-terminal CCA sequence in tRNAs without using a nucleic acid template. Adds these three nucleotides in the order of C, C, and A to the tRNA nucleotide-73, using CTP and ATP as substrates and producing inorganic pyrophosphate. tRNA 3'-terminal CCA addition is required both for tRNA processing and repair. Also involved in tRNA surveillance by mediating tandem CCA addition to generate a CCACCA at the 3' terminus of unstable tRNAs. While stable tRNAs receive only 3'-terminal CCA, unstable tRNAs are marked with CCACCA and rapidly degraded. This chain is Multifunctional CCA protein, found in Shewanella sediminis (strain HAW-EB3).